Consider the following 345-residue polypeptide: Protein sdf-9 (345 aa).

A Tyrosine-protein phosphatase domain is found at 33–284 (NRNRVVKIVP…SFIYEAVLDY (252 aa)).

Belongs to the protein-tyrosine phosphatase family. In terms of tissue distribution, expressed in the 2 embryonic head hypodermal cells XXXL/R.

The protein resides in the cytoplasm. It localises to the cell membrane. Its function is as follows. Together with eak-4 and phosphatase eak-6, negatively regulates dauer larva formation downstream of insulin-like receptor daf-2 and in parallel of age-1, pdk-1 and akt-1. This is Protein sdf-9 from Caenorhabditis elegans.